The chain runs to 472 residues: FAD-linked oxidoreductase azaL (472 aa).

A signal peptide spans 1–18 (MFRTILLCSLGLTTLSSA). Residues N22, N44, N102, N123, N227, N246, N273, N305, N318, N390, and N415 are each glycosylated (N-linked (GlcNAc...) asparagine). Positions 54–228 (TTYDAPTYIG…TSATYKIYNA (175 aa)) constitute an FAD-binding PCMH-type domain.

The protein belongs to the oxygen-dependent FAD-linked oxidoreductase family.

It functions in the pathway secondary metabolite biosynthesis. Its function is as follows. FAD-linked oxidoreductase; part of the gene cluster that mediates the biosynthesis of azaphilones, a class of fungal metabolites characterized by a highly oxygenated pyrano-quinone bicyclic core and exhibiting a broad range of bioactivities. In the first step, the non-reducing polyketide synthase azaA forms the hexaketide precursor from successive condensations of five malonyl-CoA units, presumably with a simple acetyl-CoA starter unit. The reactive polyketide chain then undergoes a PT-mediated C2-C7 cyclization to afford the aromatic ring and is eventually released as an aldehyde through the R-domain. The putative ketoreductase azaE is proposed to catalyze the reduction of the terminal ketone resulting in the early culture product FK17-P2a. The monooxygenase azaH was demonstrated to be the only enzyme required to convert FK17-P2a to azanigerone E. AzaH first hydroxylates the benzaldehyde intermediate FK17-P2a at C4, which triggers the formation of the pyran-ring to afford azanigerone E. In parallel, the 2,4-dimethylhexanoyl chain is synthesized by the HR-PKS azaB and is proposed to be transferred to the C4-hydroxyl of azanigerone E by the acyltransferase azaD directly from the ACP domain of azaB. Alternatively, the 2,4-dimethyl-hexanoyl chain may be offloaded from the HR-PKS as a carboxylic acid and converted to an acyl-CoA by azaF. The resulting acyl-CoA molecule could then be taken up as a substrate by AzaD to form azanigerone B. To yield the carboxylic acid substituent in azanigerone A, the hydroxypropyl side chain of azanigerone B would need to undergo a C-C oxidative cleavage catalyzed by cytochrome P450 AzaI. AzaI is proposed to act on a vicinal diol that leads to a C-C bond scission either through an alkoxyradical intermediate or a peroxy complex. In the biosynthesis of azanigerone A, azanigerone B first undergoes hydroxylation at C10, possibly catalyzed by one of the two FAD-dependent monooxygenases encoded in the cluster, azaG or azaL, resulting in the vicinal diol azanigerone C. Oxidative cleavage of azanigerone C by azaI would yield the corresponding aldehyde derivative of azanigerone A. Finally, the dehydrogenase azaJ is proposed to convert the aldehyde functional group into the carboxylic acid, completing the conversion from azanigerone B to azanigerone A. Alternatively, the oxidation of aldehyde to carboxylic acid may be catalyzed by the same P450 enzyme azaI via consecutive oxidation or by endogenous alcohol dehydrogenase. The sequence is that of FAD-linked oxidoreductase azaL from Aspergillus niger (strain ATCC 1015 / CBS 113.46 / FGSC A1144 / LSHB Ac4 / NCTC 3858a / NRRL 328 / USDA 3528.7).